The following is a 294-amino-acid chain: Glutamate-binding protein GluB (294 aa).

The signal sequence occupies residues 1–26 (MSHKRMFTRLAAATSAAVLAGITLTA). Residue cysteine 27 is the site of N-palmitoyl cysteine attachment. Cysteine 27 carries the S-diacylglycerol cysteine lipid modification.

This sequence belongs to the bacterial solute-binding protein 3 family. In terms of assembly, the complex is composed of two ATP-binding proteins (GluA), two transmembrane proteins (GluC and GluD) and a solute-binding protein (GluB).

The protein resides in the cell membrane. Part of the ABC transporter complex GluABCD involved in glutamate uptake. Binds glutamate with a high affinity. In Corynebacterium efficiens (strain DSM 44549 / YS-314 / AJ 12310 / JCM 11189 / NBRC 100395), this protein is Glutamate-binding protein GluB.